Reading from the N-terminus, the 184-residue chain is Ribosome-recycling factor (184 aa).

Belongs to the RRF family.

Its subcellular location is the cytoplasm. Functionally, responsible for the release of ribosomes from messenger RNA at the termination of protein biosynthesis. May increase the efficiency of translation by recycling ribosomes from one round of translation to another. This Acinetobacter baumannii (strain AB307-0294) protein is Ribosome-recycling factor.